Reading from the N-terminus, the 409-residue chain is Argininosuccinate synthase (409 aa).

ATP-binding positions include 15-23 and A42; that span reads AYSGGLDTS. L-citrulline-binding residues include Y93 and S98. G123 provides a ligand contact to ATP. 3 residues coordinate L-aspartate: T125, N129, and D130. Residue N129 participates in L-citrulline binding. R133, S182, S191, E267, and Y279 together coordinate L-citrulline.

This sequence belongs to the argininosuccinate synthase family. Type 1 subfamily. In terms of assembly, homotetramer.

It is found in the cytoplasm. It catalyses the reaction L-citrulline + L-aspartate + ATP = 2-(N(omega)-L-arginino)succinate + AMP + diphosphate + H(+). The protein operates within amino-acid biosynthesis; L-arginine biosynthesis; L-arginine from L-ornithine and carbamoyl phosphate: step 2/3. The chain is Argininosuccinate synthase from Desulfitobacterium hafniense (strain Y51).